A 132-amino-acid polypeptide reads, in one-letter code: Small ribosomal subunit protein uS8 (132 aa).

The protein belongs to the universal ribosomal protein uS8 family. In terms of assembly, part of the 30S ribosomal subunit. Contacts proteins S5 and S12.

In terms of biological role, one of the primary rRNA binding proteins, it binds directly to 16S rRNA central domain where it helps coordinate assembly of the platform of the 30S subunit. This is Small ribosomal subunit protein uS8 from Clostridium perfringens (strain ATCC 13124 / DSM 756 / JCM 1290 / NCIMB 6125 / NCTC 8237 / Type A).